We begin with the raw amino-acid sequence, 158 residues long: MGRFIFVSFGLLVLFLSLSGTGAGLHCPSDWYYYDQHCYRIFNEEMNWEDAEWFCTKQAKGAHLVSIKSAKEADFVAWMVTQNIEESFSHVSIGLRVQNKEKQCSTKWSDGSSVSYDNLLDLYITKCSLLKKETGFRKWFVASCIGKIPFVCKFPPQC.

A signal peptide spans 1–23 (MGRFIFVSFGLLVLFLSLSGTGA). Disulfide bonds link C27–C38, C55–C152, and C127–C144. The C-type lectin domain occupies 34 to 158 (YDQHCYRIFN…PFVCKFPPQC (125 aa)).

This sequence belongs to the snaclec family. In terms of assembly, tetramer of heterodimers of alpha and beta subunits (alphabeta)(4); disulfide-linked. Expressed by the venom gland.

Its subcellular location is the secreted. In terms of biological role, snake venom lectin that activates platelets by binding to the platelet collagen receptor glycoprotein VI (GP6). The indirect activation of integrin alpha-IIb/beta-3 (ITGA2B/ITGB3) also induced by the toxin is upstream the cytoskeletal translocation of GPIb, FcRgamma (FCER1G) and 14-3-3zeta (YWHAZ). This Crotalus durissus terrificus (South American rattlesnake) protein is Snaclec convulxin subunit alpha.